We begin with the raw amino-acid sequence, 338 residues long: Putative pectinesterase 63 (338 aa).

The signal sequence occupies residues 1–24 (MGYNYVSLIVTILLVVITSPVVFG). 2 residues coordinate substrate: threonine 116 and glutamine 151. Aspartate 174 (proton donor) is an active-site residue. Aspartate 195 acts as the Nucleophile in catalysis. Arginine 252 contributes to the substrate binding site.

This sequence belongs to the pectinesterase family.

It is found in the secreted. It localises to the cell wall. It catalyses the reaction [(1-&gt;4)-alpha-D-galacturonosyl methyl ester](n) + n H2O = [(1-&gt;4)-alpha-D-galacturonosyl](n) + n methanol + n H(+). Its pathway is glycan metabolism; pectin degradation; 2-dehydro-3-deoxy-D-gluconate from pectin: step 1/5. Acts in the modification of cell walls via demethylesterification of cell wall pectin. The chain is Putative pectinesterase 63 (PME63) from Arabidopsis thaliana (Mouse-ear cress).